The chain runs to 349 residues: Divinyl chlorophyll a/b light-harvesting protein PcbE (349 aa).

6 helical membrane-spanning segments follow: residues 27–47 (FIAAHIAHTGLIAFAAGGSTL), 65–85 (IFLAHLASIGIGFDEAGAWTG), 88–108 (VASIAIVHLVLSMVYGAGGLL), 201–221 (VLGGHAFLAFLEITGGAFHIA), 241–261 (AILSFSCAGLGWMAVVAAFWC), and 308–328 (LANVHYYFGFFFLQGHLWHAL).

This sequence belongs to the PsbB/PsbC family. IsiA/Pcb subfamily. In terms of assembly, the antenna complex consists of divinyl chlorophylls (a and b) and divinyl chlorophyll a/b binding proteins and binds more divinyl chlorophyll b than does the antenna complex from high-light-adapted Prochlorococcus. Divinyl chlorophyll a serves as cofactor. Requires divinyl chlorophyll b as cofactor.

Its subcellular location is the cellular thylakoid membrane. Its function is as follows. The antenna complex functions as a light receptor, it captures and delivers excitation energy to photosystems II and I. The Prochlorales pcb genes are not related to higher plant LHCs. This is Divinyl chlorophyll a/b light-harvesting protein PcbE (pcbE) from Prochlorococcus marinus (strain NATL2A).